Here is a 343-residue protein sequence, read N- to C-terminus: N-acetyl-gamma-glutamyl-phosphate reductase (343 aa).

Cys-147 is a catalytic residue.

The protein belongs to the NAGSA dehydrogenase family. Type 1 subfamily.

It localises to the cytoplasm. It catalyses the reaction N-acetyl-L-glutamate 5-semialdehyde + phosphate + NADP(+) = N-acetyl-L-glutamyl 5-phosphate + NADPH + H(+). The protein operates within amino-acid biosynthesis; L-arginine biosynthesis; N(2)-acetyl-L-ornithine from L-glutamate: step 3/4. Its function is as follows. Catalyzes the NADPH-dependent reduction of N-acetyl-5-glutamyl phosphate to yield N-acetyl-L-glutamate 5-semialdehyde. This is N-acetyl-gamma-glutamyl-phosphate reductase from Staphylococcus aureus (strain USA300).